A 607-amino-acid polypeptide reads, in one-letter code: UvrABC system protein C (607 aa).

Residues 15–93 (SEPGVYCMLD…IKKYQPRYNI (79 aa)) form the GIY-YIG domain. The 36-residue stretch at 202-237 (HEVIADLIKKMEAASQQLNFELAAKVRDQIMLLRKM) folds into the UVR domain.

The protein belongs to the UvrC family. In terms of assembly, interacts with UvrB in an incision complex.

It is found in the cytoplasm. Functionally, the UvrABC repair system catalyzes the recognition and processing of DNA lesions. UvrC both incises the 5' and 3' sides of the lesion. The N-terminal half is responsible for the 3' incision and the C-terminal half is responsible for the 5' incision. The sequence is that of UvrABC system protein C from Pseudoalteromonas translucida (strain TAC 125).